Here is a 337-residue protein sequence, read N- to C-terminus: DNA-directed RNA polymerase subunit alpha (337 aa).

The alpha N-terminal domain (alpha-NTD) stretch occupies residues 1–233; it reads MIQKNWQELI…DQLSVFVNFK (233 aa). The interval 249–337 is alpha C-terminal domain (alpha-CTD); the sequence is FNPALLKKVD…DLAKHYEDQY (89 aa).

The protein belongs to the RNA polymerase alpha chain family. In terms of assembly, homodimer. The RNAP catalytic core consists of 2 alpha, 1 beta, 1 beta' and 1 omega subunit. When a sigma factor is associated with the core the holoenzyme is formed, which can initiate transcription.

The catalysed reaction is RNA(n) + a ribonucleoside 5'-triphosphate = RNA(n+1) + diphosphate. DNA-dependent RNA polymerase catalyzes the transcription of DNA into RNA using the four ribonucleoside triphosphates as substrates. This is DNA-directed RNA polymerase subunit alpha from Bartonella bacilliformis (strain ATCC 35685 / KC583 / Herrer 020/F12,63).